Reading from the N-terminus, the 351-residue chain is Probable aldo-keto reductase 2 (351 aa).

Tyrosine 67 acts as the Proton donor in catalysis. A substrate-binding site is contributed by histidine 134. An NADP(+)-binding site is contributed by serine 213–glycine 223. The interval tyrosine 317–glutamine 351 is disordered. Residues methionine 332–glutamine 351 show a composition bias toward polar residues.

Belongs to the aldo/keto reductase family.

The polypeptide is Probable aldo-keto reductase 2 (Oryza sativa subsp. japonica (Rice)).